A 162-amino-acid chain; its full sequence is uncharacterized protein (162 aa).

The signal sequence occupies residues 1-24 (MCKRFKFLLAVSALFISITVVLAG). C25 carries the N-palmitoyl cysteine lipid modification. C25 is lipidated: S-diacylglycerol cysteine.

Its subcellular location is the cell membrane. This is an uncharacterized protein from Bacillus anthracis.